Reading from the N-terminus, the 293-residue chain is Formamidopyrimidine-DNA glycosylase (293 aa).

Pro2 functions as the Schiff-base intermediate with DNA in the catalytic mechanism. Glu3 acts as the Proton donor in catalysis. Lys58 serves as the catalytic Proton donor; for beta-elimination activity. Residues His104, Arg123, and Arg166 each coordinate DNA. An FPG-type zinc finger spans residues 257–293 (KVYDREGEPCPTLRCKGHVQRIVQAGRSTFFCATCQR). Arg283 serves as the catalytic Proton donor; for delta-elimination activity.

It belongs to the FPG family. As to quaternary structure, monomer. Zn(2+) serves as cofactor.

The enzyme catalyses Hydrolysis of DNA containing ring-opened 7-methylguanine residues, releasing 2,6-diamino-4-hydroxy-5-(N-methyl)formamidopyrimidine.. It carries out the reaction 2'-deoxyribonucleotide-(2'-deoxyribose 5'-phosphate)-2'-deoxyribonucleotide-DNA = a 3'-end 2'-deoxyribonucleotide-(2,3-dehydro-2,3-deoxyribose 5'-phosphate)-DNA + a 5'-end 5'-phospho-2'-deoxyribonucleoside-DNA + H(+). Functionally, involved in base excision repair of DNA damaged by oxidation or by mutagenic agents. Acts as a DNA glycosylase that recognizes and removes damaged bases. Has a preference for oxidized purines, such as 7,8-dihydro-8-oxoguanine (8-oxoG). Has AP (apurinic/apyrimidinic) lyase activity and introduces nicks in the DNA strand. Cleaves the DNA backbone by beta-delta elimination to generate a single-strand break at the site of the removed base with both 3'- and 5'-phosphates. In Azorhizobium caulinodans (strain ATCC 43989 / DSM 5975 / JCM 20966 / LMG 6465 / NBRC 14845 / NCIMB 13405 / ORS 571), this protein is Formamidopyrimidine-DNA glycosylase.